Here is a 495-residue protein sequence, read N- to C-terminus: Muscle LIM protein Mlp84B (495 aa).

One can recognise an LIM zinc-binding 1 domain in the interval 12-63 (CPRCGKSVYAAEERLAGGYVFHKNCFKCGMCNKSLDSTNCTEHERELYCKTC). The short motif at 66–71 (RKFGPK) is the Nuclear localization signal element. An LIM zinc-binding 2 domain is found at 120–172 (CPRCGGYVYAAEQMLARGRSWHKECFKCGTCKKGLDSILCCEAPDKNIYCKGC). Residues 175 to 180 (KKFGPK) carry the Nuclear localization signal motif. LIM zinc-binding domains follow at residues 222 to 274 (CPRC…CRTC), 325 to 377 (CPRC…CRAC), and 421 to 473 (CPRC…CRAC).

As to expression, in the embryo, expression is restricted to the somatic, visceral, and pharyngeal muscles. Within the somatic musculature, expression is localized at the ends of muscles fibers at the point of attachment to the epidermis (at protein level). There is no expression in cardiac mesoderm or in fat body.

Its subcellular location is the cytoplasm. The protein localises to the nucleus. In terms of biological role, plays a role in cell differentiation late in myogenesis. Transcription factor Mef2 is essential for expression. The protein is Muscle LIM protein Mlp84B of Drosophila melanogaster (Fruit fly).